A 281-amino-acid chain; its full sequence is Large ribosomal subunit protein uL2 (281 aa).

Positions 222–281 are disordered; it reads TVRGSAMNPNDHPHGGGEGRQPIGRKSPMTPWGKRALGVKTRATKKASNQFIIRRRKETK.

The protein belongs to the universal ribosomal protein uL2 family. As to quaternary structure, part of the 50S ribosomal subunit. Forms a bridge to the 30S subunit in the 70S ribosome.

Functionally, one of the primary rRNA binding proteins. Required for association of the 30S and 50S subunits to form the 70S ribosome, for tRNA binding and peptide bond formation. It has been suggested to have peptidyltransferase activity; this is somewhat controversial. Makes several contacts with the 16S rRNA in the 70S ribosome. The sequence is that of Large ribosomal subunit protein uL2 from Metamycoplasma hominis (strain ATCC 23114 / DSM 25592 / NBRC 14850 / NCTC 10111 / PG21) (Mycoplasma hominis).